The following is a 357-amino-acid chain: (4E)-oxalomesaconate Delta-isomerase (357 aa).

The protein belongs to the PrpF family.

It carries out the reaction (1E)-4-oxobut-1-ene-1,2,4-tricarboxylate = (3Z)-2-oxo-4-carboxy-3-hexenedioate. The protein operates within secondary metabolite metabolism; lignin degradation. Contributes to the degradation of lignin at the level of the protocatechuate 4,5-cleavage pathway. Catalyzes the isomerization of the double bond between C4 and C5 in (4E)-oxalomesaconate (OMA) to (3Z)-2-keto-4-carboxy-3-hexenedioate (KCH), where the double bond has migrated between C3 and C4 via a 1,3-allylic isomerization. In Novosphingobium sp. (strain KA1) (Sphingomonas sp. (strain KA1)), this protein is (4E)-oxalomesaconate Delta-isomerase.